The primary structure comprises 976 residues: Receptor-like protein 14 (976 aa).

Positions 1 to 26 (MERKVFSGQNLIWVMLLLVQLRGYKC) are cleaved as a signal peptide. Residues 27-928 (CIEKERKALL…DDDDEAAIDM (902 aa)) lie on the Extracellular side of the membrane. Residues Asn60, Asn75, Asn98, Asn112, Asn151, Asn185, and Asn200 are each glycosylated (N-linked (GlcNAc...) asparagine). LRR repeat units follow at residues 105 to 127 (FEEL…LFDD), 137 to 160 (LRNL…FLNA), 162 to 185 (TSLT…ELKN), 186 to 209 (LTKL…FTHL), 210 to 233 (EKLK…ELKV), 234 to 258 (LTNL…VFCE), 260 to 283 (KNLR…LGNL), 284 to 306 (NKLR…SFNS), 308 to 331 (ESLE…PLAN), 333 to 358 (TKLK…WLPK), 359 to 381 (FQLT…LVYQ), 382 to 405 (TNLR…LLEN), 407 to 428 (PELK…PTIV), 429 to 452 (HKLQ…IGHV), 454 to 477 (PRLL…MGEM), 478 to 501 (NDIS…LLTG), and 503 to 528 (FSLI…RLTS). An N-linked (GlcNAc...) asparagine glycan is attached at Asn331. Asn416 carries an N-linked (GlcNAc...) asparagine glycan. 2 N-linked (GlcNAc...) asparagine glycosylation sites follow: Asn460 and Asn489. Residues 530–549 (IVLRMHNNLFTGEIGVGLRT) form an LRR 18; degenerate repeat. 11 LRR repeats span residues 550–573 (LVNL…SIPP), 575–599 (SSHL…LLAI), 600–623 (HHLN…VVNS), 625–645 (YGIK…VTLL), 646–669 (ENAY…VNTG), 671–692 (MITL…LCDL), 693–715 (TSIR…CLNH), 782–805 (LDYM…ELGD), 806–829 (LSKL…NFSK), 831–854 (KDIE…LTNL), and 856–879 (SLAV…QFNT). A glycan (N-linked (GlcNAc...) asparagine) is linked at Asn552. An N-linked (GlcNAc...) asparagine glycan is attached at Asn633. N-linked (GlcNAc...) asparagine glycosylation occurs at Asn680. Asn813, Asn826, Asn853, Asn861, and Asn866 each carry an N-linked (GlcNAc...) asparagine glycan. Residues 897–922 (DRSCEGKKNTKEADNGGEEEEEDDDD) form a disordered region. A compositionally biased stretch (basic and acidic residues) spans 898–910 (RSCEGKKNTKEAD). A compositionally biased stretch (acidic residues) spans 911 to 922 (NGGEEEEEDDDD). The chain crosses the membrane as a helical span at residues 929 to 949 (VVLYWTTGSTYAIALIGILVL). Topologically, residues 950–976 (MCFDCPWRRTWLCIVDAFIASGKSMFS) are cytoplasmic.

Belongs to the RLP family.

The protein resides in the cell membrane. The sequence is that of Receptor-like protein 14 from Arabidopsis thaliana (Mouse-ear cress).